A 325-amino-acid polypeptide reads, in one-letter code: Phenylalanine--tRNA ligase alpha subunit (325 aa).

Residue E251 coordinates Mg(2+).

Belongs to the class-II aminoacyl-tRNA synthetase family. Phe-tRNA synthetase alpha subunit type 1 subfamily. As to quaternary structure, tetramer of two alpha and two beta subunits. Requires Mg(2+) as cofactor.

The protein localises to the cytoplasm. The catalysed reaction is tRNA(Phe) + L-phenylalanine + ATP = L-phenylalanyl-tRNA(Phe) + AMP + diphosphate + H(+). The polypeptide is Phenylalanine--tRNA ligase alpha subunit (Thermotoga neapolitana (strain ATCC 49049 / DSM 4359 / NBRC 107923 / NS-E)).